A 488-amino-acid polypeptide reads, in one-letter code: 26S proteasome non-ATPase regulatory subunit 3 homolog A (488 aa).

In terms of domain architecture, PCI spans 240–421; that stretch reads CRYLFYLGKI…GCMVSKETGD (182 aa). Residues 451–488 form a disordered region; the sequence is RFPPNTHKEKESDEKRRERKQQEEELAKHMAEEDDDDF. Residues 456 to 481 are compositionally biased toward basic and acidic residues; sequence THKEKESDEKRRERKQQEEELAKHMA.

The protein belongs to the proteasome subunit S3 family. In terms of assembly, component of the 19S regulatory particle (RP/PA700) lid subcomplex of the 26S proteasome. The 26S proteasome is composed of a core protease (CP), known as the 20S proteasome, capped at one or both ends by the 19S regulatory particle (RP/PA700). The RP/PA700 complex is composed of at least 17 different subunits in two subcomplexes, the base and the lid, which form the portions proximal and distal to the 20S proteolytic core, respectively. Interacts with UCH1 and UCH2. In terms of tissue distribution, ubiquitous with highest expression in flowers.

Its function is as follows. Acts as a regulatory subunit of the 26 proteasome which is involved in the ATP-dependent degradation of ubiquitinated proteins. The protein is 26S proteasome non-ATPase regulatory subunit 3 homolog A of Arabidopsis thaliana (Mouse-ear cress).